Reading from the N-terminus, the 566-residue chain is APC/C activator protein CDH1 (566 aa).

The span at 1 to 18 shows a compositional bias: polar residues; that stretch reads MSTNLNPFMNNTPSSSPL. The interval 1 to 56 is disordered; that stretch reads MSTNLNPFMNNTPSSSPLKGSESKRVSKRPISSSSSASLLSSPSRRSRPSTVYGDR. Low complexity predominate over residues 29–44; that stretch reads RPISSSSSASLLSSPS. A C-box motif is present at residues 55 to 61; it reads DRYIPSR. At Ser213 the chain carries Phosphoserine. WD repeat units lie at residues 258-298, 300-339, 342-379, 383-422, 425-467, 469-510, and 513-552; these read PSLA…VVHL, DTEN…CIRT, GHID…PFFE, SHTQ…PILT, EHKA…KMSD, DSGS…PIAI, and GHSF…KAKV.

It belongs to the WD repeat CDC20/Fizzy family. Associates with the APC/C complex. Interacts with CLB2, CLB3, CDC5, HSL1, MSN5 and PSE1. Phosphorylated at multiple sites by CDC28, probably in its CLB5 bound form, in S, G2 and M phase of the cell cycle, thereby blocking the association of CDH1 to the APC/C and promoting nuclear export of CDH1 by MSN5. Dephosphorylated and activated by CDC14 in late anaphase, which may be necessary for PSE1-dependent nuclear localization.

It is found in the cytoplasm. The protein localises to the nucleus. In terms of biological role, activator protein that regulates the ubiquitin ligase activity and substrate specificity of the anaphase promoting complex/cyclosome (APC/C). During telophase and in the subsequent G1 phase of the cell cycle, recognizes and binds proteins containing a destruction box (D-box) and an additional degradation signal termed the KEN box including ASE1, CDC20, the B-type cyclins CLB2 and CLB3, the polo-like kinase CDC5 and HSL1, and recruits them in a C-box-dependent manner to the APC/C for ubiquitination and subsequent proteolysis. Required for exit from mitosis, cytokinesis and formation of prereplicative complexes in G1. Probably is the target of a BUB2-dependent spindle checkpoint pathway. The chain is APC/C activator protein CDH1 (CDH1) from Saccharomyces cerevisiae (strain ATCC 204508 / S288c) (Baker's yeast).